Reading from the N-terminus, the 214-residue chain is Large ribosomal subunit protein uL4 (214 aa).

The segment at 43 to 83 (RRQAGTHKAKSRSEVNRTTKKSIKQKGSGGARHGSRNAPIF) is disordered.

It belongs to the universal ribosomal protein uL4 family. Part of the 50S ribosomal subunit.

One of the primary rRNA binding proteins, this protein initially binds near the 5'-end of the 23S rRNA. It is important during the early stages of 50S assembly. It makes multiple contacts with different domains of the 23S rRNA in the assembled 50S subunit and ribosome. In terms of biological role, forms part of the polypeptide exit tunnel. This Hyphomonas neptunium (strain ATCC 15444) protein is Large ribosomal subunit protein uL4.